A 548-amino-acid chain; its full sequence is Sesquiterpene synthase 9 (548 aa).

Residues Asp-300, Asp-304, and Glu-453 each contribute to the Mg(2+) site. The short motif at 300–304 is the DDXXD motif element; it reads DDTFD.

It belongs to the terpene synthase family. Tpsa subfamily. The cofactor is Mg(2+). It depends on Mn(2+) as a cofactor. In terms of tissue distribution, mostly expressed in stem and trichomes, to a lower extent in roots, leaves and flowers and, at low levels, in fruits.

It is found in the cytoplasm. The enzyme catalyses (2E,6E)-farnesyl diphosphate = germacrene C + diphosphate. The catalysed reaction is (2E)-geranyl diphosphate = terpinolene + diphosphate. It catalyses the reaction (2E)-geranyl diphosphate = limonene + diphosphate. It carries out the reaction (2E)-geranyl diphosphate = beta-myrcene + diphosphate. The enzyme catalyses (2Z,6Z)-farnesyl diphosphate = germacrene C + diphosphate. The protein operates within secondary metabolite biosynthesis; terpenoid biosynthesis. Involved in the biosynthesis of germacrene C, one of the most abundant sesquiterpene in the leaf oil of tomato. Produces mainly germacrene C, but also smaller amounts of germacrene A, B and D when used with farnesyl diphosphate (FPP) as substrate; able to use both (2E,6E)-farnesyl diphosphate ((EE)-FPP) and (2Z,6Z)-farnesyl diphosphate ((ZZ)-FPP). No or low activity with geranylgeranyl diphosphate (GGPP). Can act with a low efficiency as a monoterpene synthase with geranyl diphosphate (GPP) as substrate, thus producing beta-myrcene, limonene and terpinolene. The chain is Sesquiterpene synthase 9 from Solanum lycopersicum (Tomato).